The following is a 354-amino-acid chain: uncharacterized protein (354 aa).

Residues 43–63 traverse the membrane as a helical segment; it reads LIAVTLWSCVGSLLFICLLAV.

The protein resides in the cell membrane. This is an uncharacterized protein from Bacillus subtilis (strain 168).